A 285-amino-acid polypeptide reads, in one-letter code: uncharacterized protein (285 aa).

Residue Ser-168 coordinates substrate. Residue Tyr-181 is the Proton acceptor of the active site.

Belongs to the short-chain dehydrogenases/reductases (SDR) family.

This is an uncharacterized protein from Haemophilus influenzae (strain ATCC 51907 / DSM 11121 / KW20 / Rd).